Consider the following 338-residue polypeptide: Ketol-acid reductoisomerase (NADP(+)) (338 aa).

The 181-residue stretch at 2-182 (TKMYYEEDTD…GGARAGVLET (181 aa)) folds into the KARI N-terminal Rossmann domain. Residues 25-28 (YGSQ), serine 51, serine 53, and 83-86 (DELQ) each bind NADP(+). Histidine 108 is an active-site residue. Residue glycine 134 coordinates NADP(+). The KARI C-terminal knotted domain maps to 183–330 (TFRTETETDL…SEIRKLYCWN (148 aa)). Mg(2+)-binding residues include aspartate 191, glutamate 195, glutamate 227, and glutamate 231. Substrate is bound at residue serine 252.

The protein belongs to the ketol-acid reductoisomerase family. It depends on Mg(2+) as a cofactor.

It catalyses the reaction (2R)-2,3-dihydroxy-3-methylbutanoate + NADP(+) = (2S)-2-acetolactate + NADPH + H(+). The catalysed reaction is (2R,3R)-2,3-dihydroxy-3-methylpentanoate + NADP(+) = (S)-2-ethyl-2-hydroxy-3-oxobutanoate + NADPH + H(+). It participates in amino-acid biosynthesis; L-isoleucine biosynthesis; L-isoleucine from 2-oxobutanoate: step 2/4. It functions in the pathway amino-acid biosynthesis; L-valine biosynthesis; L-valine from pyruvate: step 2/4. Involved in the biosynthesis of branched-chain amino acids (BCAA). Catalyzes an alkyl-migration followed by a ketol-acid reduction of (S)-2-acetolactate (S2AL) to yield (R)-2,3-dihydroxy-isovalerate. In the isomerase reaction, S2AL is rearranged via a Mg-dependent methyl migration to produce 3-hydroxy-3-methyl-2-ketobutyrate (HMKB). In the reductase reaction, this 2-ketoacid undergoes a metal-dependent reduction by NADPH to yield (R)-2,3-dihydroxy-isovalerate. This Clostridium botulinum (strain Eklund 17B / Type B) protein is Ketol-acid reductoisomerase (NADP(+)).